A 428-amino-acid polypeptide reads, in one-letter code: Enolase (428 aa).

Residue Gln-163 participates in (2R)-2-phosphoglycerate binding. Catalysis depends on Glu-205, which acts as the Proton donor. Positions 242, 285, and 312 each coordinate Mg(2+). (2R)-2-phosphoglycerate is bound by residues Lys-337, Arg-366, Ser-367, and Lys-388. The Proton acceptor role is filled by Lys-337.

It belongs to the enolase family. Requires Mg(2+) as cofactor.

The protein resides in the cytoplasm. It is found in the secreted. Its subcellular location is the cell surface. The catalysed reaction is (2R)-2-phosphoglycerate = phosphoenolpyruvate + H2O. It participates in carbohydrate degradation; glycolysis; pyruvate from D-glyceraldehyde 3-phosphate: step 4/5. In terms of biological role, catalyzes the reversible conversion of 2-phosphoglycerate (2-PG) into phosphoenolpyruvate (PEP). It is essential for the degradation of carbohydrates via glycolysis. The sequence is that of Enolase from Carboxydothermus hydrogenoformans (strain ATCC BAA-161 / DSM 6008 / Z-2901).